We begin with the raw amino-acid sequence, 668 residues long: DNA ligase (668 aa).

NAD(+)-binding positions include 34–38, 83–84, and Glu-114; these read DTEYD and SL. Lys-116 serves as the catalytic N6-AMP-lysine intermediate. Arg-137, Glu-171, Lys-286, and Lys-310 together coordinate NAD(+). Zn(2+)-binding residues include Cys-404, Cys-407, Cys-422, and Cys-427. The BRCT domain maps to 588–668; that stretch reads NSDSIIANKT…FFDLLKSEKG (81 aa).

This sequence belongs to the NAD-dependent DNA ligase family. LigA subfamily. The cofactor is Mg(2+). Mn(2+) is required as a cofactor.

It carries out the reaction NAD(+) + (deoxyribonucleotide)n-3'-hydroxyl + 5'-phospho-(deoxyribonucleotide)m = (deoxyribonucleotide)n+m + AMP + beta-nicotinamide D-nucleotide.. Its function is as follows. DNA ligase that catalyzes the formation of phosphodiester linkages between 5'-phosphoryl and 3'-hydroxyl groups in double-stranded DNA using NAD as a coenzyme and as the energy source for the reaction. It is essential for DNA replication and repair of damaged DNA. The sequence is that of DNA ligase from Mycoplasma capricolum subsp. capricolum (strain California kid / ATCC 27343 / NCTC 10154).